The sequence spans 206 residues: Transcription antitermination protein NusB (206 aa).

The disordered stretch occupies residues 135–206 (ARGEKTSAQE…ETQPPGVNEV (72 aa)). The span at 169–180 (ATPATTPVTTTV) shows a compositional bias: low complexity.

This sequence belongs to the NusB family.

Functionally, involved in transcription antitermination. Required for transcription of ribosomal RNA (rRNA) genes. Binds specifically to the boxA antiterminator sequence of the ribosomal RNA (rrn) operons. The chain is Transcription antitermination protein NusB from Heliobacterium modesticaldum (strain ATCC 51547 / Ice1).